The primary structure comprises 455 residues: Gamma-glutamyl phosphate reductase (455 aa).

It belongs to the gamma-glutamyl phosphate reductase family.

The protein resides in the cytoplasm. The catalysed reaction is L-glutamate 5-semialdehyde + phosphate + NADP(+) = L-glutamyl 5-phosphate + NADPH + H(+). The protein operates within amino-acid biosynthesis; L-proline biosynthesis; L-glutamate 5-semialdehyde from L-glutamate: step 2/2. Functionally, catalyzes the NADPH-dependent reduction of L-glutamate 5-phosphate into L-glutamate 5-semialdehyde and phosphate. The product spontaneously undergoes cyclization to form 1-pyrroline-5-carboxylate. In Synechococcus sp. (strain JA-2-3B'a(2-13)) (Cyanobacteria bacterium Yellowstone B-Prime), this protein is Gamma-glutamyl phosphate reductase.